The sequence spans 304 residues: MIKQRTPKKVIQATGVGLHSGEKVLLTLRPAPVNTGIVFRRVDLSPVVEIPASYEYVGDTMLCTTLHHGKVKIATVEHLLSALAGLGIDNAYIDVNAPEIPIMDGSAAPFVFLIQSAGIREQNAAKRYIRILKPIRVEENGKYVQFLPHKGYKITFTIGFEHPVFNDRPQTVSFDFSGTSYVKEVCRARTFGFLSDYEKLRECDLAKGGSLDNAIVVDDYRVLNEDGLRFESEFVTHKVLDAIGDLYLLGSSLIGAFEGYKSGHELNNRLLRELMVRQDAWEYTYFDTENYLPAVHPEYYPVEA.

Zn(2+) is bound by residues histidine 78, histidine 237, and aspartate 241. The Proton donor role is filled by histidine 264.

It belongs to the LpxC family. The cofactor is Zn(2+).

It carries out the reaction a UDP-3-O-[(3R)-3-hydroxyacyl]-N-acetyl-alpha-D-glucosamine + H2O = a UDP-3-O-[(3R)-3-hydroxyacyl]-alpha-D-glucosamine + acetate. The protein operates within glycolipid biosynthesis; lipid IV(A) biosynthesis; lipid IV(A) from (3R)-3-hydroxytetradecanoyl-[acyl-carrier-protein] and UDP-N-acetyl-alpha-D-glucosamine: step 2/6. Functionally, catalyzes the hydrolysis of UDP-3-O-myristoyl-N-acetylglucosamine to form UDP-3-O-myristoylglucosamine and acetate, the committed step in lipid A biosynthesis. This is UDP-3-O-acyl-N-acetylglucosamine deacetylase from Legionella pneumophila (strain Paris).